Here is a 142-residue protein sequence, read N- to C-terminus: Large ribosomal subunit protein uL13 (142 aa).

This sequence belongs to the universal ribosomal protein uL13 family. Part of the 50S ribosomal subunit.

This protein is one of the early assembly proteins of the 50S ribosomal subunit, although it is not seen to bind rRNA by itself. It is important during the early stages of 50S assembly. This is Large ribosomal subunit protein uL13 from Psychrobacter arcticus (strain DSM 17307 / VKM B-2377 / 273-4).